Here is a 630-residue protein sequence, read N- to C-terminus: Membrane protein insertase YidC (630 aa).

The next 5 membrane-spanning stretches (helical) occupy residues 10 to 30, 396 to 416, 470 to 490, 528 to 548, and 571 to 591; these read LMFLVCAFAILIGYQFLVMGP, MVGNFGVAIMLLTVALKLILF, VPMLIQIPIFYSLYKVLTVTI, LIGAFLSGPLHIGVWPLLYGF, and FFPIVFTFTLSQFAVGLVIYW.

Belongs to the OXA1/ALB3/YidC family. Type 1 subfamily. In terms of assembly, interacts with the Sec translocase complex via SecD. Specifically interacts with transmembrane segments of nascent integral membrane proteins during membrane integration.

The protein localises to the cell inner membrane. Required for the insertion and/or proper folding and/or complex formation of integral membrane proteins into the membrane. Involved in integration of membrane proteins that insert both dependently and independently of the Sec translocase complex, as well as at least some lipoproteins. Aids folding of multispanning membrane proteins. The sequence is that of Membrane protein insertase YidC from Caulobacter sp. (strain K31).